We begin with the raw amino-acid sequence, 32 residues long: Photosystem II reaction center protein T (32 aa).

Residues 3 to 23 traverse the membrane as a helical segment; sequence ALVYTFLLVATLGIIFFAIFF.

The protein belongs to the PsbT family. As to quaternary structure, PSII is composed of 1 copy each of membrane proteins PsbA, PsbB, PsbC, PsbD, PsbE, PsbF, PsbH, PsbI, PsbJ, PsbK, PsbL, PsbM, PsbT, PsbY, PsbZ, Psb30/Ycf12, at least 3 peripheral proteins of the oxygen-evolving complex and a large number of cofactors. It forms dimeric complexes.

It localises to the plastid. The protein resides in the chloroplast thylakoid membrane. Found at the monomer-monomer interface of the photosystem II (PS II) dimer, plays a role in assembly and dimerization of PSII. PSII is a light-driven water plastoquinone oxidoreductase, using light energy to abstract electrons from H(2)O, generating a proton gradient subsequently used for ATP formation. This Psilotum nudum (Whisk fern) protein is Photosystem II reaction center protein T.